We begin with the raw amino-acid sequence, 204 residues long: MFTVTVKNMGTTEYLTAWQAMKNFTAQRTCETPDEIWLLEHPPVYTQGIAGKPEHLLFPNQIPVIKTDRGGQITYHGPGQIILYLLLDLHRWRLNIRQLVRKMEGAVIDLLSEYDVVAQGDENAPGVYVDGAKIASLGLKIRRGACYHGIAFNADMDLTPFTAINPCGYRGLRVTQAKDLGIADCKEMLATKLAQSFINQLTDV.

The BPL/LPL catalytic domain maps to 30–204 (CETPDEIWLL…QSFINQLTDV (175 aa)). Substrate contacts are provided by residues 69-76 (RGGQITYH), 136-138 (SLG), and 149-151 (GIA). Cys167 functions as the Acyl-thioester intermediate in the catalytic mechanism.

It belongs to the LipB family.

It localises to the cytoplasm. The enzyme catalyses octanoyl-[ACP] + L-lysyl-[protein] = N(6)-octanoyl-L-lysyl-[protein] + holo-[ACP] + H(+). The protein operates within protein modification; protein lipoylation via endogenous pathway; protein N(6)-(lipoyl)lysine from octanoyl-[acyl-carrier-protein]: step 1/2. Its function is as follows. Catalyzes the transfer of endogenously produced octanoic acid from octanoyl-acyl-carrier-protein onto the lipoyl domains of lipoate-dependent enzymes. Lipoyl-ACP can also act as a substrate although octanoyl-ACP is likely to be the physiological substrate. In Nitrosomonas europaea (strain ATCC 19718 / CIP 103999 / KCTC 2705 / NBRC 14298), this protein is Octanoyltransferase.